Reading from the N-terminus, the 98-residue chain is Lipolysis-activating peptide 1-beta chain (98 aa).

An N-terminal signal peptide occupies residues 1-22; sequence MANVQVIFVAYIAVIAFSMVYG. The LCN-type CS-alpha/beta domain maps to 23–91; that stretch reads DDYKPFGEHN…FLKAMEKQCP (69 aa). 3 disulfides stabilise this stretch: Cys-37/Cys-60, Cys-45/Cys-70, and Cys-49/Cys-72.

This sequence belongs to the long (3 C-C) scorpion toxin superfamily. As to quaternary structure, homodimer; disulfide-linked or monomer (edited version) or heterodimer of an alpha chain (AC B8XH01) and this beta chain (non-edited version). As to expression, expressed by the venom gland.

The protein localises to the secreted. Its function is as follows. The homodimer inhibits HMG-CoA reductase (HMGCR) (32% of inhibition produced by 0.6 uM), a glycoprotein involved in the control of cholesterol biosynthesis. The inhibitory effects of bumarsin are seen at much lower concentrations (0.6 uM) than that for statins such as atorvastatin (5 mM) and simvastatin (10 uM). In addition to inhibition of HMG-CoA reductase, this protein lowers cholesterol levels by inducing steroid hormone synthesis via StAR, and by increasing reverse cholesterol transport mediated by the induction of ABCA1 and APOA1. Functionally, the heterodimer non-edited LVP1 induces lipolysis in rat adipocytes. Induction of lipolysis by LVP1 appears to be mediated through the beta-2 adrenergic receptor pathway (ADRB2). In terms of biological role, the monomer edited version, similar to alpha-toxins, may modulate voltage-gated sodium channels (Nav) and may block voltage-gated potassium channels (Kv). The polypeptide is Lipolysis-activating peptide 1-beta chain (Buthus israelis (Israeli scorpion)).